Reading from the N-terminus, the 585-residue chain is Cytochrome c lysine N-methyltransferase 1 (585 aa).

The SET domain maps to 18–273; it reads KSLSLKPSTI…KPIEVFISYS (256 aa). An SET-like region spans residues 186-288; that stretch reads LNLSDIKHLY…FSMLVTYGFT (103 aa).

The protein belongs to the class V-like SAM-binding methyltransferase superfamily.

The protein resides in the cytoplasm. It is found in the cytosol. It carries out the reaction L-lysyl-[cytochrome c] + S-adenosyl-L-methionine = N(6)-methyl-L-lysyl-[cytochrome c] + S-adenosyl-L-homocysteine + H(+). Functionally, methyltransferase which mediates trimethylation of 'Lys-78' of cytochrome c (CYC1). The chain is Cytochrome c lysine N-methyltransferase 1 (CTM1) from Saccharomyces cerevisiae (strain ATCC 204508 / S288c) (Baker's yeast).